The following is a 472-amino-acid chain: Carboxypeptidase Q (472 aa).

The N-terminal stretch at Met1 to Gly20 is a signal peptide. Positions Lys21–Glu44 are excised as a propeptide. A glycan (N-linked (GlcNAc...) asparagine) is linked at Asn61. Residues His290 and Asp302 each contribute to the Zn(2+) site. Glu336 (nucleophile) is an active-site residue. Glu337 lines the Zn(2+) pocket. Asn353 carries an N-linked (GlcNAc...) asparagine glycan. Asp364 is a Zn(2+) binding site. Asn396 is a glycosylation site (N-linked (GlcNAc...) asparagine). Position 434 (His434) interacts with Zn(2+).

This sequence belongs to the peptidase M28 family. In terms of assembly, homodimer. The monomeric form is inactive while the homodimer is active. In terms of processing, N-glycosylated. The secreted form is modified by hybrid or complex type oligosaccharide chains.

It is found in the endoplasmic reticulum. Its subcellular location is the golgi apparatus. The protein resides in the lysosome. It localises to the secreted. Carboxypeptidase that may play an important role in the hydrolysis of circulating peptides. Catalyzes the hydrolysis of dipeptides with unsubstituted terminals into amino acids. May play a role in the liberation of thyroxine hormone from its thyroglobulin (Tg) precursor. This is Carboxypeptidase Q (Cpq) from Rattus norvegicus (Rat).